We begin with the raw amino-acid sequence, 356 residues long: Histidinol-phosphate aminotransferase (356 aa).

Lysine 214 is modified (N6-(pyridoxal phosphate)lysine).

It belongs to the class-II pyridoxal-phosphate-dependent aminotransferase family. Histidinol-phosphate aminotransferase subfamily. Homodimer. Pyridoxal 5'-phosphate is required as a cofactor.

It catalyses the reaction L-histidinol phosphate + 2-oxoglutarate = 3-(imidazol-4-yl)-2-oxopropyl phosphate + L-glutamate. Its pathway is amino-acid biosynthesis; L-histidine biosynthesis; L-histidine from 5-phospho-alpha-D-ribose 1-diphosphate: step 7/9. The protein is Histidinol-phosphate aminotransferase of Escherichia coli (strain 55989 / EAEC).